Reading from the N-terminus, the 329-residue chain is Neuropeptides B/W receptor type 1 (329 aa).

The Extracellular segment spans residues 1–39 (MHNLSLFEPGRGNVSCGGPFLGCPNESNPAPLPLPQPLA). Asn3, Asn13, and Asn25 each carry an N-linked (GlcNAc...) asparagine glycan. A helical transmembrane segment spans residues 40–63 (VAVPVVYGVICAVGLAGNSAVLYV). Residues 64–74 (LLRTPRMKTVT) lie on the Cytoplasmic side of the membrane. A helical membrane pass occupies residues 75–99 (NVFILNLAIADELFTLVLPINIADF). Over 100–114 (LLRRWPFGEVMCKLI) the chain is Extracellular. Cys111 and Cys190 form a disulfide bridge. A helical membrane pass occupies residues 115–134 (VAVDQYNTFSSLYFLAVMSA). The Cytoplasmic portion of the chain corresponds to 135 to 159 (DRYLVVLATAESRRVSGRTYGAARA). The chain crosses the membrane as a helical span at residues 160 to 179 (VSLAVWALVTLVVLPFAVFA). The Extracellular segment spans residues 180-204 (RLDEEQGRRQCVLVFPQPEAFWWRA). Residues 205–226 (SRLYTLVLGFAIPVSTICALYI) traverse the membrane as a helical segment. The Cytoplasmic portion of the chain corresponds to 227–250 (TLLCRLRAIQLDSHAKALDRAKKR). The chain crosses the membrane as a helical span at residues 251-275 (VTLLVVAILAVCLLCWTPYHLSTIV). The Extracellular segment spans residues 276-285 (ALTTDLPQTP). A helical transmembrane segment spans residues 286-300 (LVIGISYFITSLSYA). Residues 301–329 (NSCLNPFLYAFLDDSFRRSLRQLVSCRTA) lie on the Cytoplasmic side of the membrane.

This sequence belongs to the G-protein coupled receptor 1 family.

The protein resides in the cell membrane. Interacts specifically with a number of opioid ligands. Receptor for neuropeptides B and W, which may be involved in neuroendocrine system regulation, food intake and the organization of other signals. The protein is Neuropeptides B/W receptor type 1 (Npbwr1) of Rattus norvegicus (Rat).